The chain runs to 188 residues: Elongation factor P (188 aa).

Belongs to the elongation factor P family.

The protein localises to the cytoplasm. It functions in the pathway protein biosynthesis; polypeptide chain elongation. Functionally, involved in peptide bond synthesis. Stimulates efficient translation and peptide-bond synthesis on native or reconstituted 70S ribosomes in vitro. Probably functions indirectly by altering the affinity of the ribosome for aminoacyl-tRNA, thus increasing their reactivity as acceptors for peptidyl transferase. This chain is Elongation factor P, found in Mycoplasmoides gallisepticum (strain R(low / passage 15 / clone 2)) (Mycoplasma gallisepticum).